The primary structure comprises 209 residues: Response regulator protein VraR (209 aa).

The 117-residue stretch at 4–120 (KVLFVDDHEM…DIAEAIRKTY (117 aa)) folds into the Response regulatory domain. At aspartate 55 the chain carries 4-aspartylphosphate. The HTH luxR-type domain maps to 141 to 206 (RAELYEMLTE…QAVIYAFQHN (66 aa)). The H-T-H motif DNA-binding region spans 165 to 184 (NQEIASASHITIKTVKTHVS).

In terms of processing, phosphorylated by VraS.

Its subcellular location is the cytoplasm. Member of the two-component regulatory system VraS/VraR involved in the control of the cell wall peptidoglycan biosynthesis. This Staphylococcus saprophyticus subsp. saprophyticus (strain ATCC 15305 / DSM 20229 / NCIMB 8711 / NCTC 7292 / S-41) protein is Response regulator protein VraR (vraR).